Consider the following 590-residue polypeptide: Aspartate--tRNA(Asp/Asn) ligase (590 aa).

Glutamate 175 is an L-aspartate binding site. The interval 199-202 is aspartate; it reads QQYK. Residues arginine 221 and histidine 450 each coordinate L-aspartate. 221 to 223 is an ATP binding site; sequence RDE. Position 484 (glutamate 484) interacts with ATP. Arginine 491 is a binding site for L-aspartate. Residue 536 to 539 coordinates ATP; it reads GVDR.

This sequence belongs to the class-II aminoacyl-tRNA synthetase family. Type 1 subfamily. In terms of assembly, homodimer.

The protein resides in the cytoplasm. It carries out the reaction tRNA(Asx) + L-aspartate + ATP = L-aspartyl-tRNA(Asx) + AMP + diphosphate. In terms of biological role, aspartyl-tRNA synthetase with relaxed tRNA specificity since it is able to aspartylate not only its cognate tRNA(Asp) but also tRNA(Asn). Reaction proceeds in two steps: L-aspartate is first activated by ATP to form Asp-AMP and then transferred to the acceptor end of tRNA(Asp/Asn). In Rhodopseudomonas palustris (strain BisB5), this protein is Aspartate--tRNA(Asp/Asn) ligase.